Here is a 330-residue protein sequence, read N- to C-terminus: Aspartate--ammonia ligase (330 aa).

Belongs to the class-II aminoacyl-tRNA synthetase family. AsnA subfamily.

The protein localises to the cytoplasm. The enzyme catalyses L-aspartate + NH4(+) + ATP = L-asparagine + AMP + diphosphate + H(+). The protein operates within amino-acid biosynthesis; L-asparagine biosynthesis; L-asparagine from L-aspartate (ammonia route): step 1/1. In Shigella sonnei (strain Ss046), this protein is Aspartate--ammonia ligase.